We begin with the raw amino-acid sequence, 202 residues long: Outer-membrane lipoprotein carrier protein (202 aa).

A signal peptide spans methionine 1–alanine 21.

Belongs to the LolA family. Monomer.

The protein resides in the periplasm. Its function is as follows. Participates in the translocation of lipoproteins from the inner membrane to the outer membrane. Only forms a complex with a lipoprotein if the residue after the N-terminal Cys is not an aspartate (The Asp acts as a targeting signal to indicate that the lipoprotein should stay in the inner membrane). This is Outer-membrane lipoprotein carrier protein from Yersinia pestis bv. Antiqua (strain Antiqua).